The primary structure comprises 428 residues: MDHYSDQGGDGIELLDLLFDKNDGILRYENMGQQNNQLWPVQDPHMMMTPQGNEDFFNALIGGSDSVSGSPVWSPSPSDSGISEDPHSDHIDSPPPNASPPMEPHIVVSQTQHSLNINFPFDFNGWETGFLPDQSGGTQCASETPQAQQTTGFPLTVKDLLLSGTPEPAAKVSQQSYQELILTEDEKRLLAKEGMTLPNQFPLTKYEERILKKIRRKIRNKQSAQESRKKKKEYIDGLESRMAACSAHNHELQRKVFQLEKCNISLMEQLRRLQALVMNGSNKPVQAGTCVLVLLLSFTLILLPNLKPFTDTKVSQHGDFSPMRVQSRSLHNLQSSRVLRNLDHPYSMTENAKILPRFPEDKTMEEIASLLGRLHRRPQFTEYDPESHNHSFDQHDEHHHGDPITGHVATVTLNPRRGSRRSPHADDM.

Topologically, residues 1 to 286 are cytoplasmic; it reads MDHYSDQGGD…VMNGSNKPVQ (286 aa). A compositionally biased stretch (low complexity) spans 67 to 83; the sequence is VSGSPVWSPSPSDSGIS. Residues 67 to 104 are disordered; the sequence is VSGSPVWSPSPSDSGISEDPHSDHIDSPPPNASPPMEP. Residues 93 to 103 show a composition bias toward pro residues; it reads SPPPNASPPME. In terms of domain architecture, bZIP spans 210 to 273; it reads ILKKIRRKIR…ISLMEQLRRL (64 aa). The basic motif stretch occupies residues 212–241; sequence KKIRRKIRNKQSAQESRKKKKEYIDGLESR. The interval 252–273 is leucine-zipper; sequence LQRKVFQLEKCNISLMEQLRRL. A helical; Signal-anchor for type II membrane protein transmembrane segment spans residues 287 to 303; sequence AGTCVLVLLLSFTLILL. Over 304–428 the chain is Lumenal; it reads PNLKPFTDTK…SRRSPHADDM (125 aa). The disordered stretch occupies residues 381–428; the sequence is TEYDPESHNHSFDQHDEHHHGDPITGHVATVTLNPRRGSRRSPHADDM. A compositionally biased stretch (basic and acidic residues) spans 385–402; the sequence is PESHNHSFDQHDEHHHGD. The N-linked (GlcNAc...) asparagine glycan is linked to Asn-389.

Belongs to the bZIP family. ATF subfamily. Binds DNA as a dimer. Post-translationally, controlled by regulated intramembrane proteolysis (RIP). A fragment containing the cytoplasmic transcription factor domain is released by proteolysis. The cleavage seems to be performed sequentially by site-1 and site-2 proteases.

It is found in the endoplasmic reticulum membrane. Its subcellular location is the nucleus. Functionally, transcriptional activator. Binds the cAMP response element (CRE). Activates transcription through box-B element and CRE. Seems to function synergistically with atf6. Regulates FGF21 transcription. This is Cyclic AMP-responsive element-binding protein 3-like protein 3-B (creb3l3b) from Danio rerio (Zebrafish).